Reading from the N-terminus, the 348-residue chain is Anthranilate phosphoribosyltransferase (348 aa).

5-phospho-alpha-D-ribose 1-diphosphate-binding positions include Gly89, 92 to 93 (GD), Thr97, 99 to 102 (NIST), 117 to 125 (KHGNRSVSS), and Ser129. Residue Gly89 participates in anthranilate binding. Ser101 serves as a coordination point for Mg(2+). Asn120 is a binding site for anthranilate. Arg175 contributes to the anthranilate binding site. Residues Asp233 and Glu234 each coordinate Mg(2+).

Belongs to the anthranilate phosphoribosyltransferase family. Homodimer. It depends on Mg(2+) as a cofactor.

It carries out the reaction N-(5-phospho-beta-D-ribosyl)anthranilate + diphosphate = 5-phospho-alpha-D-ribose 1-diphosphate + anthranilate. Its pathway is amino-acid biosynthesis; L-tryptophan biosynthesis; L-tryptophan from chorismate: step 2/5. Catalyzes the transfer of the phosphoribosyl group of 5-phosphorylribose-1-pyrophosphate (PRPP) to anthranilate to yield N-(5'-phosphoribosyl)-anthranilate (PRA). The sequence is that of Anthranilate phosphoribosyltransferase from Shewanella sp. (strain W3-18-1).